The following is an 83-amino-acid chain: MSPTITRPLIGQLCPLTNVGQIAETFSSEEVSFVETVDPLRHASKGGHHDDDNLPQGTLNNIWRGNPVIAWAALLRIAHKHFR.

It participates in secondary metabolite biosynthesis. Functionally, part of the gene cluster that mediates the biosynthesis of aspergillic acid, a hydroxamic acid-containing pyrazinone with aliphatic side chains that originates from leucine (Leu) and isoleucine (Ile). Aspergillic acid has antibiotic properties and was shown to be lethal to mice. The first step in the pathway is the production of deoxyaspergillic acid via a condensation between the Ile amine and the Leu carboxylic acid, followed by a reductive release from the protein forming the dipeptide aldehyde NH(2)-Leu-Ile-CHO, which could undergo an intermolecular cyclization resulting in a dihydropyrazinone. As the NRPS asaC lacks a condensation domain, it is improbable that it is responsible for condensation of Leu and Ile. One possibility is that asaC acts on a previously condensed dipeptide and functions as a Leu-Ile reductase to yield deoxyaspergillic acid. After asaC forms deoxyaspergillic acid, the cytochrome P450 asaD oxidizes the pyrazinone to the hydroxamic acid-containing bioactive metabolite aspergillic acid. The hydroxylase/desaturase asaB can then convert aspergillic acid to hydroxyaspergillic acid. Both aspergillic acid and hydroxyaspergillic acid can form complexes with iron producing ferriaspergillin analogs. This is Aspergillic acid biosynthesis cluster protein F from Aspergillus flavus (strain ATCC 200026 / FGSC A1120 / IAM 13836 / NRRL 3357 / JCM 12722 / SRRC 167).